The sequence spans 249 residues: Enolase-phosphatase E1 (249 aa).

Residues aspartate 14 and glutamate 16 each coordinate Mg(2+). Substrate-binding positions include 141–142 and lysine 175; that span reads SS. Aspartate 200 lines the Mg(2+) pocket.

The protein belongs to the HAD-like hydrolase superfamily. MasA/MtnC family. Monomer. The cofactor is Mg(2+).

It is found in the cytoplasm. The protein resides in the nucleus. The catalysed reaction is 5-methylsulfanyl-2,3-dioxopentyl phosphate + H2O = 1,2-dihydroxy-5-(methylsulfanyl)pent-1-en-3-one + phosphate. It participates in amino-acid biosynthesis; L-methionine biosynthesis via salvage pathway; L-methionine from S-methyl-5-thio-alpha-D-ribose 1-phosphate: step 3/6. The protein operates within amino-acid biosynthesis; L-methionine biosynthesis via salvage pathway; L-methionine from S-methyl-5-thio-alpha-D-ribose 1-phosphate: step 4/6. In terms of biological role, bifunctional enzyme that catalyzes the enolization of 2,3-diketo-5-methylthiopentyl-1-phosphate (DK-MTP-1-P) into the intermediate 2-hydroxy-3-keto-5-methylthiopentenyl-1-phosphate (HK-MTPenyl-1-P), which is then dephosphorylated to form the acireductone 1,2-dihydroxy-3-keto-5-methylthiopentene (DHK-MTPene). This is Enolase-phosphatase E1 from Drosophila virilis (Fruit fly).